Here is a 61-residue protein sequence, read N- to C-terminus: Protein transport protein Sec61 subunit beta (61 aa).

Topologically, residues 1-35 are cytoplasmic; sequence MKRPSTQRAPATVNKGGNSMMKFYSEDAIGLKVGP. A helical transmembrane segment spans residues 36 to 56; sequence TAVLFMSLIFIAFVIILHIMG. The Extracellular portion of the chain corresponds to 57 to 61; that stretch reads KYTRS.

It belongs to the SEC61-beta family. As to quaternary structure, the SEC61 channel-forming translocon complex.

It localises to the endoplasmic reticulum membrane. Functionally, component of SEC61 channel-forming translocon complex that mediates transport of signal peptide-containing precursor polypeptides across the endoplasmic reticulum (ER). Forms a ribosome receptor and a gated pore in the ER membrane, both functions required for cotranslational translocation of nascent polypeptides. The polypeptide is Protein transport protein Sec61 subunit beta (sec61b) (Dictyostelium discoideum (Social amoeba)).